The sequence spans 561 residues: Dihydroxy-acid dehydratase (561 aa).

[2Fe-2S] cluster is bound at residue C51. Position 83 (D83) interacts with Mg(2+). C124 provides a ligand contact to [2Fe-2S] cluster. Mg(2+) contacts are provided by D125 and K126. Position 126 is an N6-carboxylysine (K126). Residue C196 coordinates [2Fe-2S] cluster. E447 lines the Mg(2+) pocket. Residue S473 is the Proton acceptor of the active site.

It belongs to the IlvD/Edd family. As to quaternary structure, homodimer. [2Fe-2S] cluster is required as a cofactor. Mg(2+) serves as cofactor.

The catalysed reaction is (2R)-2,3-dihydroxy-3-methylbutanoate = 3-methyl-2-oxobutanoate + H2O. It carries out the reaction (2R,3R)-2,3-dihydroxy-3-methylpentanoate = (S)-3-methyl-2-oxopentanoate + H2O. The protein operates within amino-acid biosynthesis; L-isoleucine biosynthesis; L-isoleucine from 2-oxobutanoate: step 3/4. Its pathway is amino-acid biosynthesis; L-valine biosynthesis; L-valine from pyruvate: step 3/4. In terms of biological role, functions in the biosynthesis of branched-chain amino acids. Catalyzes the dehydration of (2R,3R)-2,3-dihydroxy-3-methylpentanoate (2,3-dihydroxy-3-methylvalerate) into 2-oxo-3-methylpentanoate (2-oxo-3-methylvalerate) and of (2R)-2,3-dihydroxy-3-methylbutanoate (2,3-dihydroxyisovalerate) into 2-oxo-3-methylbutanoate (2-oxoisovalerate), the penultimate precursor to L-isoleucine and L-valine, respectively. This is Dihydroxy-acid dehydratase from Oceanobacillus iheyensis (strain DSM 14371 / CIP 107618 / JCM 11309 / KCTC 3954 / HTE831).